We begin with the raw amino-acid sequence, 517 residues long: MYLNSRITRIFRLKKERFWQQNFLYPLLLQEYLYSLAHYHSFNSLIFYEPVEIIGYDNKSSLVLVKRLITQMYQQKSFISSVNDSNQNGFSLHKNSFSYHFYSQMVSEGFGVILEISFSSRLVSSLEEKRIPKSQNLRSIHSIFPFLEDKLSHLNYVSDLLIPYPIHLGILVQILQCWIKDVSSSHLLRLIFHEYHNLNRDIPSKKSIYVLSKERRRFFWFLHNFYVYGCEYIFLYRRKQSSYLRSISSGVFLERTHFYGKIGYLRVVSCYSFQRILWFLKDIFIHYVRYQGKAILASKGTFFLMNKWKFHFVNFWQSYFHFWFQPYRIHIKQLPNYSFSFLGYFSSVLKNPLVVRNQMLENSFLINTLTNKLDTIAPVIFLIGSLSKAQFCTVLGHPISKPIWTNLSDSDILDRFCRICRNLSRYHSGSSKKHILYRIKYILRFTCARTLARKHKSTVRMFMLRLGSVFLEESFLEDEQSLSLIFLHNIPFLLHRLHRERIGYLDIIRMNDLMDHS.

The protein belongs to the intron maturase 2 family. MatK subfamily.

The protein resides in the plastid. The protein localises to the chloroplast. Functionally, usually encoded in the trnK tRNA gene intron. Probably assists in splicing its own and other chloroplast group II introns. The protein is Maturase K of Phalaenopsis japonica (Orchid).